A 258-amino-acid chain; its full sequence is 5'-nucleotidase SurE (258 aa).

A divalent metal cation-binding residues include aspartate 9, aspartate 10, serine 42, and asparagine 95.

It belongs to the SurE nucleotidase family. The cofactor is a divalent metal cation.

It localises to the cytoplasm. The catalysed reaction is a ribonucleoside 5'-phosphate + H2O = a ribonucleoside + phosphate. In terms of biological role, nucleotidase that shows phosphatase activity on nucleoside 5'-monophosphates. This Campylobacter concisus (strain 13826) protein is 5'-nucleotidase SurE.